The following is a 586-amino-acid chain: Exopolysaccharide phosphotransferase SCO6023 (586 aa).

Belongs to the stealth family.

In Streptomyces coelicolor (strain ATCC BAA-471 / A3(2) / M145), this protein is Exopolysaccharide phosphotransferase SCO6023.